An 89-amino-acid polypeptide reads, in one-letter code: Cell division topological specificity factor (89 aa).

This sequence belongs to the MinE family.

Prevents the cell division inhibition by proteins MinC and MinD at internal division sites while permitting inhibition at polar sites. This ensures cell division at the proper site by restricting the formation of a division septum at the midpoint of the long axis of the cell. The sequence is that of Cell division topological specificity factor from Heliobacterium modesticaldum (strain ATCC 51547 / Ice1).